Here is a 189-residue protein sequence, read N- to C-terminus: UPF0340 protein SAG0103 (189 aa).

The protein belongs to the UPF0340 family.

The sequence is that of UPF0340 protein SAG0103 from Streptococcus agalactiae serotype V (strain ATCC BAA-611 / 2603 V/R).